We begin with the raw amino-acid sequence, 204 residues long: ATP synthase subunit b 2 (204 aa).

A helical transmembrane segment spans residues 50 to 70 (IFWLAVTFGLLLFLMSKVALP).

Belongs to the ATPase B chain family. F-type ATPases have 2 components, F(1) - the catalytic core - and F(0) - the membrane proton channel. F(1) has five subunits: alpha(3), beta(3), gamma(1), delta(1), epsilon(1). F(0) has three main subunits: a(1), b(2) and c(10-14). The alpha and beta chains form an alternating ring which encloses part of the gamma chain. F(1) is attached to F(0) by a central stalk formed by the gamma and epsilon chains, while a peripheral stalk is formed by the delta and b chains.

The protein resides in the cell inner membrane. In terms of biological role, f(1)F(0) ATP synthase produces ATP from ADP in the presence of a proton or sodium gradient. F-type ATPases consist of two structural domains, F(1) containing the extramembraneous catalytic core and F(0) containing the membrane proton channel, linked together by a central stalk and a peripheral stalk. During catalysis, ATP synthesis in the catalytic domain of F(1) is coupled via a rotary mechanism of the central stalk subunits to proton translocation. Functionally, component of the F(0) channel, it forms part of the peripheral stalk, linking F(1) to F(0). The b'-subunit is a diverged and duplicated form of b found in plants and photosynthetic bacteria. The protein is ATP synthase subunit b 2 (atpF2) of Rhodospirillum centenum (strain ATCC 51521 / SW).